The chain runs to 381 residues: Sensor histidine kinase FlgS (381 aa).

In terms of domain architecture, Histidine kinase spans 177 to 381 (HLAHEIRNPV…TFEIKILNAS (205 aa)). At His-180 the chain carries Phosphohistidine; by autocatalysis.

As to quaternary structure, interacts (via its C-terminal kinase domain) with FlhA (via N-terminus). Post-translationally, autophosphorylated.

It carries out the reaction ATP + protein L-histidine = ADP + protein N-phospho-L-histidine.. In terms of biological role, member of the two-component regulatory system FlgR/FlgS that induces the transcriptional induction of the genes needed in motility and flagellar biogenesis. Also plays an essential role in bacterial survival at pH 2.5 independently of FlgR. Functions as a sensor protein kinase which is autophosphorylated at a histidine residue and transfers its phosphate group to the conserved aspartic acid residue in the regulatory domain of FlgR. In turn, FlgR functions as a transcriptional regulator initiating transcription from RpoN-dependent promoters. The polypeptide is Sensor histidine kinase FlgS (flgS) (Helicobacter pylori (strain ATCC 700392 / 26695) (Campylobacter pylori)).